The sequence spans 222 residues: Charged multivesicular body protein 2a (222 aa).

Met-1 bears the N-acetylmethionine mark. Residues 12 to 53 (EELLRQNQRALNRAMRELDRERQKLETQEKKIIADIKKMAKQ) adopt a coiled-coil conformation. The segment at 56 to 222 (MDAVRIMAKD…EERLKNLRRD (167 aa)) is interaction with VPS4B. The segment covering 179–188 (LSNLPSTGGS) has biased composition (polar residues). The segment at 179-198 (LSNLPSTGGSLSVAAGGKKA) is disordered. Ser-184 is subject to Phosphoserine. Position 185 is a phosphothreonine (Thr-185). A phosphoserine mark is found at Ser-188, Ser-190, and Ser-203. The stretch at 195–222 (GKKAEATASALADADADLEERLKNLRRD) forms a coiled coil. Residues 210–220 (ADLEERLKNLR) carry the MIT-interacting motif motif. Positions 217-222 (KNLRRD) are interaction with VTA1.

This sequence belongs to the SNF7 family. Probable core component of the endosomal sorting required for transport complex III (ESCRT-III). ESCRT-III components are thought to multimerize to form a flat lattice on the perimeter membrane of the endosome. Several assembly forms of ESCRT-III may exist that interact and act sequentially. In vitro, heteromerizes with CHMP3 (but not CHMP4) to form helical tubular structures that expose membrane-interacting sites on the outside whereas VPS4B can associate on the inside of the tubule. Interacts with CHMP1B, CHMP2B, CHMP3, CHMP4A, CHMP4B, CHMP4C and CHMP5. Interacts with VPS4A; the interaction is direct. Interacts with VPS4B; the interaction is direct. Interacts with MITD1. Interacts with VTA1; the interaction probably involves the open conformation of CHMP2A. ISGylated in a CHMP5-dependent manner. Isgylation weakens and inhibits its interactions with VPS4A and VTA1 respectively. Widely expressed. Highly expressed in brain, heart, liver and kidney.

The protein resides in the late endosome membrane. It is found in the cytoplasm. It localises to the nucleus envelope. Probable core component of the endosomal sorting required for transport complex III (ESCRT-III) which is involved in multivesicular bodies (MVBs) formation and sorting of endosomal cargo proteins into MVBs. MVBs contain intraluminal vesicles (ILVs) that are generated by invagination and scission from the limiting membrane of the endosome and mostly are delivered to lysosomes enabling degradation of membrane proteins, such as stimulated growth factor receptors, lysosomal enzymes and lipids. The MVB pathway appears to require the sequential function of ESCRT-O, -I,-II and -III complexes. ESCRT-III proteins mostly dissociate from the invaginating membrane before the ILV is released. The ESCRT machinery also functions in topologically equivalent membrane fission events, such as the terminal stages of cytokinesis. Together with SPAST, the ESCRT-III complex promotes nuclear envelope sealing and mitotic spindle disassembly during late anaphase. Recruited to the reforming nuclear envelope (NE) during anaphase by LEMD2. ESCRT-III proteins are believed to mediate the necessary vesicle extrusion and/or membrane fission activities, possibly in conjunction with the AAA ATPase VPS4. The chain is Charged multivesicular body protein 2a (Chmp2a) from Mus musculus (Mouse).